The primary structure comprises 340 residues: Heat-inducible transcription repressor HrcA (340 aa).

It belongs to the HrcA family.

Functionally, negative regulator of class I heat shock genes (grpE-dnaK-dnaJ and groELS operons). Prevents heat-shock induction of these operons. This is Heat-inducible transcription repressor HrcA from Burkholderia mallei (strain NCTC 10247).